A 161-amino-acid chain; its full sequence is Phosphopantetheine adenylyltransferase (161 aa).

S9 contacts substrate. ATP is bound by residues 9–10 (SF) and H17. 3 residues coordinate substrate: K41, T74, and R88. ATP-binding positions include 89–91 (GVR), E99, and 124–130 (NSFVASS).

Belongs to the bacterial CoaD family. As to quaternary structure, homohexamer. Mg(2+) serves as cofactor.

It localises to the cytoplasm. It carries out the reaction (R)-4'-phosphopantetheine + ATP + H(+) = 3'-dephospho-CoA + diphosphate. It functions in the pathway cofactor biosynthesis; coenzyme A biosynthesis; CoA from (R)-pantothenate: step 4/5. In terms of biological role, reversibly transfers an adenylyl group from ATP to 4'-phosphopantetheine, yielding dephospho-CoA (dPCoA) and pyrophosphate. The sequence is that of Phosphopantetheine adenylyltransferase from Lactobacillus acidophilus (strain ATCC 700396 / NCK56 / N2 / NCFM).